A 365-amino-acid chain; its full sequence is Flavone synthase (365 aa).

4 residues coordinate Fe cation: histidine 76, histidine 218, aspartate 220, and histidine 276. Residues 194–295 (MEQKVLINYY…RLSIATFQNP (102 aa)) form the Fe2OG dioxygenase domain. The tract at residues 345–365 (RLQDEKAKLEMKSKSADENLA) is disordered.

Belongs to the iron/ascorbate-dependent oxidoreductase family. Fe cation is required as a cofactor. It depends on L-ascorbate as a cofactor.

Its subcellular location is the cytoplasm. The enzyme catalyses a flavanone + 2-oxoglutarate + O2 = a flavone + succinate + CO2 + H2O. Its pathway is secondary metabolite biosynthesis; flavonoid biosynthesis. Its function is as follows. Involved in the conversion of naringenin to apigenin. Acts via a direct 2,3-desaturation of flavanones instead of a sequential hydroxylation/dehydratation mechanism. This is Flavone synthase (FNSI) from Petroselinum crispum (Parsley).